The chain runs to 266 residues: Small ribosomal subunit protein eS1 (266 aa).

The interval E234–V266 is disordered. The segment covering T244–G257 has biased composition (basic and acidic residues).

This sequence belongs to the eukaryotic ribosomal protein eS1 family. As to quaternary structure, component of the small ribosomal subunit. Mature ribosomes consist of a small (40S) and a large (60S) subunit. The 40S subunit contains about 33 different proteins and 1 molecule of RNA (18S). The 60S subunit contains about 49 different proteins and 3 molecules of RNA (28S, 5.8S and 5S). Part of the small subunit (SSU) processome, composed of more than 70 proteins and the RNA chaperone small nucleolar RNA (snoRNA) U3.

It localises to the cytoplasm. It is found in the nucleus. The protein localises to the nucleolus. In terms of biological role, component of the small ribosomal subunit. The ribosome is a large ribonucleoprotein complex responsible for the synthesis of proteins in the cell. Part of the small subunit (SSU) processome, first precursor of the small eukaryotic ribosomal subunit. During the assembly of the SSU processome in the nucleolus, many ribosome biogenesis factors, an RNA chaperone and ribosomal proteins associate with the nascent pre-rRNA and work in concert to generate RNA folding, modifications, rearrangements and cleavage as well as targeted degradation of pre-ribosomal RNA by the RNA exosome. May play a role during erythropoiesis. This chain is Small ribosomal subunit protein eS1 (rps3a), found in Solea senegalensis (Senegalese sole).